The primary structure comprises 411 residues: Lycopene beta cyclase (411 aa).

Position 4 to 32 (4 to 32 (ALVIGSGPAGLAIAAELAQRGLKVQGLSP)) interacts with NAD(+).

Belongs to the lycopene cyclase family. Requires FAD as cofactor.

It catalyses the reaction a carotenoid psi-end group = a carotenoid beta-end derivative. The catalysed reaction is all-trans-lycopene = gamma-carotene. The enzyme catalyses gamma-carotene = all-trans-beta-carotene. It carries out the reaction all-trans-neurosporene = beta-zeacarotene. The protein operates within carotenoid biosynthesis; beta-carotene biosynthesis. Its pathway is carotenoid biosynthesis; beta-zeacarotene biosynthesis. Inhibited by the bleaching herbicide 2-(4-methylphenoxy)triethylamine hydrochloride (MPTA). Its function is as follows. Catalyzes the double cyclization reaction which converts lycopene to beta-carotene. It also converts neurosporene to the monocyclic beta-zeacarotene but does not cyclize zeta-carotene. This chain is Lycopene beta cyclase, found in Synechococcus elongatus (strain ATCC 33912 / PCC 7942 / FACHB-805) (Anacystis nidulans R2).